Here is a 265-residue protein sequence, read N- to C-terminus: Type 1 encapsulin shell protein (265 aa).

FMN is bound by residues 79–81, Trp87, and 90–94; these read RAT and DNLER. Residues 184-189 are pore-forming loop; it reads EAGHYP. Glu235 contacts FMN.

This sequence belongs to the encapsulin family. Family 1 subfamily. Homomultimeric. This encapsulin nanocompartment is formed by 60 subunits; monomers form 12 pentamers which assemble to form shells. There are 12 pores where the pentamers meet as well as 3-fold axis channels and dimer channels; none are larger than 3-4 Angstroms in diameter. The N-terminus of the protein is inside the shell, the C-terminus is outside. Probably 3, 4 or 5 Flp cargo decamers bind inside the encapulin nanocompartment. FMN is required as a cofactor.

Its subcellular location is the encapsulin nanocompartment. Proteolysis activated by calcium and cobalt. In terms of biological role, shell component of a type 1 encapsulin nanocompartment. Assembles into proteinaceous shells 23-24 nm in diameter with 2-2.5 nm thick walls. Cargo protein Flp (ferritin-like protein, probably stores iron) is targeted to the interior via its C-terminal extension; empty intact shells can be isolated in the absence of cargo protein. Fe(2+) may be able to pass though the 5-fold and dimer channels in the protein shell. Its function is as follows. Protease that exhibits activity toward chymotrypsin and trypsin substrates. Probably does not have antibacterial activity. In Thermotoga maritima (strain ATCC 43589 / DSM 3109 / JCM 10099 / NBRC 100826 / MSB8), this protein is Type 1 encapsulin shell protein.